Reading from the N-terminus, the 200-residue chain is UPF0329 protein ECU06_1670 (200 aa).

The protein belongs to the UPF0329 family.

This Encephalitozoon cuniculi (strain GB-M1) (Microsporidian parasite) protein is UPF0329 protein ECU06_1670.